We begin with the raw amino-acid sequence, 120 residues long: NAD(P)H-quinone oxidoreductase subunit 3, chloroplastic (120 aa).

3 helical membrane passes run 9–29 (IFWT…SISG), 64–84 (MFAL…PWAM), and 88–108 (VLGV…VVGL).

This sequence belongs to the complex I subunit 3 family. As to quaternary structure, NDH is composed of at least 16 different subunits, 5 of which are encoded in the nucleus.

The protein resides in the plastid. Its subcellular location is the chloroplast thylakoid membrane. It carries out the reaction a plastoquinone + NADH + (n+1) H(+)(in) = a plastoquinol + NAD(+) + n H(+)(out). The catalysed reaction is a plastoquinone + NADPH + (n+1) H(+)(in) = a plastoquinol + NADP(+) + n H(+)(out). NDH shuttles electrons from NAD(P)H:plastoquinone, via FMN and iron-sulfur (Fe-S) centers, to quinones in the photosynthetic chain and possibly in a chloroplast respiratory chain. The immediate electron acceptor for the enzyme in this species is believed to be plastoquinone. Couples the redox reaction to proton translocation, and thus conserves the redox energy in a proton gradient. In Hordeum vulgare (Barley), this protein is NAD(P)H-quinone oxidoreductase subunit 3, chloroplastic.